We begin with the raw amino-acid sequence, 282 residues long: MINVTLSPSVTVGNEAPFTLFGGINVLESRDLALRAAEEYVRVTQKLGIPYVFKGSFDKANRSSIHSYRGPGLEEGMKILQAVKDTFGVPVITDVHEPWQAAPVAEVADVVQLPAFLARQTDLVEALAKTGRAVNIKKPQFMSPAQIQNVVEKFVEAGNEQLILCDRGTCLGYDNLVVDMLGFGVMKKVSGNRPVIFDVTHSLQQRESGAAASGGRRAQVAELARAGMAVGLAGLFLEAHPNPAEAKCDGPSALPLAQLEPFLAQVKAIDDLVKSFAPLQID.

It belongs to the KdsA family.

It is found in the cytoplasm. It carries out the reaction D-arabinose 5-phosphate + phosphoenolpyruvate + H2O = 3-deoxy-alpha-D-manno-2-octulosonate-8-phosphate + phosphate. The protein operates within carbohydrate biosynthesis; 3-deoxy-D-manno-octulosonate biosynthesis; 3-deoxy-D-manno-octulosonate from D-ribulose 5-phosphate: step 2/3. Its pathway is bacterial outer membrane biogenesis; lipopolysaccharide biosynthesis. This is 2-dehydro-3-deoxyphosphooctonate aldolase from Chromobacterium violaceum (strain ATCC 12472 / DSM 30191 / JCM 1249 / CCUG 213 / NBRC 12614 / NCIMB 9131 / NCTC 9757 / MK).